A 383-amino-acid polypeptide reads, in one-letter code: Probable tRNA sulfurtransferase (383 aa).

The THUMP domain maps to 58–158 (NEIIHILKMI…ENKSYVWFDK (101 aa)). Residues 176 to 177 (LL), 201 to 202 (TF), Arg-259, Gly-281, and Gln-290 contribute to the ATP site.

It belongs to the ThiI family.

Its subcellular location is the cytoplasm. It carries out the reaction [ThiI sulfur-carrier protein]-S-sulfanyl-L-cysteine + a uridine in tRNA + 2 reduced [2Fe-2S]-[ferredoxin] + ATP + H(+) = [ThiI sulfur-carrier protein]-L-cysteine + a 4-thiouridine in tRNA + 2 oxidized [2Fe-2S]-[ferredoxin] + AMP + diphosphate. The catalysed reaction is [ThiS sulfur-carrier protein]-C-terminal Gly-Gly-AMP + S-sulfanyl-L-cysteinyl-[cysteine desulfurase] + AH2 = [ThiS sulfur-carrier protein]-C-terminal-Gly-aminoethanethioate + L-cysteinyl-[cysteine desulfurase] + A + AMP + 2 H(+). It participates in cofactor biosynthesis; thiamine diphosphate biosynthesis. In terms of biological role, catalyzes the ATP-dependent transfer of a sulfur to tRNA to produce 4-thiouridine in position 8 of tRNAs, which functions as a near-UV photosensor. Also catalyzes the transfer of sulfur to the sulfur carrier protein ThiS, forming ThiS-thiocarboxylate. This is a step in the synthesis of thiazole, in the thiamine biosynthesis pathway. The sulfur is donated as persulfide by IscS. The polypeptide is Probable tRNA sulfurtransferase (Malacoplasma penetrans (strain HF-2) (Mycoplasma penetrans)).